The primary structure comprises 498 residues: Neuronal acetylcholine receptor subunit beta-4 (498 aa).

The first 21 residues, 1-21, serve as a signal peptide directing secretion; sequence MRRAPSLVLFFLVALCGRGNC. Over 22–239 the chain is Extracellular; the sequence is RVANAEEKLM…RKPLFYTINL (218 aa). N-linked (GlcNAc...) asparagine glycosylation is found at Asn36, Asn93, Asn138, and Asn166. An intrachain disulfide couples Cys153 to Cys167. Residues 240–255 traverse the membrane as a helical segment; that stretch reads IIPCVLTTLLAILVFY. Residues 256 to 261 are Cytoplasmic-facing; that stretch reads LPSDCG. Position 262 (Glu262) interacts with Na(+). A helical membrane pass occupies residues 262–277; sequence EKMTLCISVLLALTFF. Residues 278 to 296 lie on the Extracellular side of the membrane; it reads LLLISKIVPPTSLDVPLIG. The helical transmembrane segment at 297 to 321 threads the bilayer; that stretch reads KYLMFTMVLVTFSIVTSVCVLNVHH. Residues 322–454 are Cytoplasmic-facing; it reads RSPSTHTMAP…QSVVEDWKYV (133 aa). Residues 357–377 form a disordered region; sequence ARAFPPSKSCVTKPEATATST. The helical transmembrane segment at 455–478 threads the bilayer; it reads AMVVDRLFLWVFMFVCVLGTVGLF. Residues 479 to 498 are Extracellular-facing; it reads LPPLFQTHAASEGPYAAQRD.

This sequence belongs to the ligand-gated ion channel (TC 1.A.9) family. Acetylcholine receptor (TC 1.A.9.1) subfamily. Beta-4/CHRNB4 sub-subfamily. In terms of assembly, neuronal AChR is composed of two different types of subunits: alpha and beta. CHRNB4/Beta-4 subunit can be combined to CHRNA2/alpha-2, CHRNA3/alpha-3 or CHRNA4/alpha-4, CHRNA5/alpha-5 and CHRNB3/beta-3 to give rise to functional receptors. Forms stoichiometries such as (CHRNA3)2:(CHRNB4)3 or (CHRNA3:CHRNB4)2:CHRNB3. Interacts with RIC3; which is required for proper folding and assembly. Interacts with LYPD6.

It is found in the synaptic cell membrane. It localises to the cell membrane. The catalysed reaction is Ca(2+)(in) = Ca(2+)(out). The enzyme catalyses K(+)(in) = K(+)(out). It carries out the reaction Na(+)(in) = Na(+)(out). Its activity is regulated as follows. Activated by a myriad of ligands such as acetylcholine, cytisine, nicotine, choline and epibatidine. The heteropentamer CHRNA3:CHRNB4 activity is blocked by the alpha-conotoxin ImI and AuIB. Functionally, component of neuronal acetylcholine receptors (nAChRs) that function as pentameric, ligand-gated cation channels with high calcium permeability among other activities. nAChRs are excitatory neurotrasnmitter receptors formed by a collection of nAChR subunits known to mediate synaptic transmission in the nervous system and the neuromuscular junction. Each nAchR subunit confers differential attributes to channel properties, including activation, deactivation and desensitization kinetics, pH sensitivity, cation permeability, and binding to allosteric modulators. CHRNB4 forms heteropentameric neuronal acetylcholine receptors with CHRNA2, CHRNA3 and CHRNA4, as well as CHRNA5 and CHRNB3 as accesory subunits. CHRNA3:CHRNB4 being predominant in neurons of the autonomic ganglia, it is known as ganglionic nicotinic receptor. CHRNA3:CHRNB4 or CHRNA3:CHRNA5:CHRNB4 play also an important role in the habenulo-interpeduncular tract, modulating the mesolimbic dopamine system and affecting reward circuits and addiction. Hypothalamic CHRNA3:CHRNB4 nAChR activation by nicotine leads to activation of POMC neurons and a decrease in food intake. This Homo sapiens (Human) protein is Neuronal acetylcholine receptor subunit beta-4.